A 2195-amino-acid chain; its full sequence is Activating signal cointegrator 1 complex subunit 3 (2195 aa).

Positions 31–88 form a coiled coil; that stretch reads EQVVARNKEIMKKRNEKKKEKDRIIEKGQLTWSYFSDSKQNKEKEKENRQIFNKFKEI. Residues 367–378 show a composition bias toward basic and acidic residues; that stretch reads QLKKDDKKRYKN. The interval 367 to 387 is disordered; sequence QLKKDDKKRYKNDQQQQQQQQ. One can recognise a Helicase ATP-binding 1 domain in the interval 492 to 675; sequence ESAYKSNENI…FIRAPASGTH (184 aa). 505 to 512 is a binding site for ATP; sequence APTGAGKT. Positions 617-620 match the DEAH box motif; that stretch reads DEIH. The region spanning 705 to 920 is the Helicase C-terminal 1 domain; it reads NMNQLCYERL…NVNEAVNWLS (216 aa). One can recognise an SEC63 1 domain in the interval 980-1286; the sequence is MTELGRIASH…GSEGIREISF (307 aa). The 176-residue stretch at 1336–1511 folds into the Helicase ATP-binding 2 domain; the sequence is HTLYYTNNNV…WMGIDRVGLF (176 aa). 1349 to 1356 provides a ligand contact to ATP; the sequence is SPTGSGKT. The DEAH box signature appears at 1453–1456; the sequence is DEIH. The 206-residue stretch at 1545–1750 folds into the Helicase C-terminal 2 domain; that stretch reads SFAAIATYSP…GTIQSKQGAI (206 aa). The 160-residue stretch at 1810-1969 folds into the SEC63 2 domain; it reads PMSMGKIASF…LPHINKDFAD (160 aa). The segment covering 2032–2062 has biased composition (low complexity); that stretch reads TNNNSNNNDDNNNENNNNNNKKNNNNNNNNN. The tract at residues 2032-2064 is disordered; that stretch reads TNNNSNNNDDNNNENNNNNNKKNNNNNNNNNKS.

Belongs to the helicase family.

It localises to the nucleus. Its subcellular location is the cytoplasm. It is found in the cytosol. It carries out the reaction Couples ATP hydrolysis with the unwinding of duplex DNA by translocating in the 3'-5' direction.. It catalyses the reaction ATP + H2O = ADP + phosphate + H(+). Functionally, ATPase involved both in DNA repair and rescue of stalled ribosomes. The sequence is that of Activating signal cointegrator 1 complex subunit 3 (ascc3) from Dictyostelium discoideum (Social amoeba).